The primary structure comprises 240 residues: Pyridoxine 5'-phosphate synthase (240 aa).

N6 provides a ligand contact to 3-amino-2-oxopropyl phosphate. 1-deoxy-D-xylulose 5-phosphate is bound at residue 8–9; it reads DH. Residue R17 coordinates 3-amino-2-oxopropyl phosphate. The Proton acceptor role is filled by H42. Residues R44 and H49 each contribute to the 1-deoxy-D-xylulose 5-phosphate site. Catalysis depends on E69, which acts as the Proton acceptor. Residue T99 participates in 1-deoxy-D-xylulose 5-phosphate binding. H193 (proton donor) is an active-site residue. Residues G194 and 216-217 each bind 3-amino-2-oxopropyl phosphate; that span reads GH.

The protein belongs to the PNP synthase family. In terms of assembly, homooctamer; tetramer of dimers.

It localises to the cytoplasm. It carries out the reaction 3-amino-2-oxopropyl phosphate + 1-deoxy-D-xylulose 5-phosphate = pyridoxine 5'-phosphate + phosphate + 2 H2O + H(+). It functions in the pathway cofactor biosynthesis; pyridoxine 5'-phosphate biosynthesis; pyridoxine 5'-phosphate from D-erythrose 4-phosphate: step 5/5. Its function is as follows. Catalyzes the complicated ring closure reaction between the two acyclic compounds 1-deoxy-D-xylulose-5-phosphate (DXP) and 3-amino-2-oxopropyl phosphate (1-amino-acetone-3-phosphate or AAP) to form pyridoxine 5'-phosphate (PNP) and inorganic phosphate. The protein is Pyridoxine 5'-phosphate synthase of Hydrogenobaculum sp. (strain Y04AAS1).